The following is a 501-amino-acid chain: Probable cytochrome P450 508A4 (501 aa).

Residues 1–21 traverse the membrane as a helical segment; the sequence is MIMLIKVFVLLLVVYILHNSY. Cys445 contacts heme.

This sequence belongs to the cytochrome P450 family. It depends on heme as a cofactor.

It is found in the membrane. The protein is Probable cytochrome P450 508A4 (cyp508A4) of Dictyostelium discoideum (Social amoeba).